Here is a 478-residue protein sequence, read N- to C-terminus: Protein nucleotidyltransferase YdiU (478 aa).

8 residues coordinate ATP: Gly-84, Gly-86, Arg-87, Lys-107, Asp-119, Gly-120, Arg-170, and Arg-177. Asp-246 functions as the Proton acceptor in the catalytic mechanism. The Mg(2+) site is built by Asn-247 and Asp-256. Asp-256 contributes to the ATP binding site.

Belongs to the SELO family. It depends on Mg(2+) as a cofactor. Requires Mn(2+) as cofactor.

It carries out the reaction L-seryl-[protein] + ATP = 3-O-(5'-adenylyl)-L-seryl-[protein] + diphosphate. The catalysed reaction is L-threonyl-[protein] + ATP = 3-O-(5'-adenylyl)-L-threonyl-[protein] + diphosphate. It catalyses the reaction L-tyrosyl-[protein] + ATP = O-(5'-adenylyl)-L-tyrosyl-[protein] + diphosphate. The enzyme catalyses L-histidyl-[protein] + UTP = N(tele)-(5'-uridylyl)-L-histidyl-[protein] + diphosphate. It carries out the reaction L-seryl-[protein] + UTP = O-(5'-uridylyl)-L-seryl-[protein] + diphosphate. The catalysed reaction is L-tyrosyl-[protein] + UTP = O-(5'-uridylyl)-L-tyrosyl-[protein] + diphosphate. Its function is as follows. Nucleotidyltransferase involved in the post-translational modification of proteins. It can catalyze the addition of adenosine monophosphate (AMP) or uridine monophosphate (UMP) to a protein, resulting in modifications known as AMPylation and UMPylation. This Escherichia coli O1:K1 / APEC protein is Protein nucleotidyltransferase YdiU.